We begin with the raw amino-acid sequence, 237 residues long: MKWIEVNTYDEMSEVAANIFLKQIQKKPNSVLGLATGGSPVGMYKELVARYQAGQLTFKDVQTFNLDEYVGLKRSSPASYWTFMHNNLFNGVNIKQENIHLPNGEAEDLAAECKAYDARIDAAGGIDLQLLGIGVNGHIGFNEPGTPFDSMTNIVELTESTRTENAIYFDDAADVPIHAITMGIQSIMKAKEIVLIAFGEKKMEAIQKLKSGHITEDFPASQLLKHPNVTIIYGGTN.

The Proton acceptor; for enolization step role is filled by Asp67. Residue Asn136 is the For ring-opening step of the active site. Catalysis depends on His138, which acts as the Proton acceptor; for ring-opening step. Glu143 functions as the For ring-opening step in the catalytic mechanism.

The protein belongs to the glucosamine/galactosamine-6-phosphate isomerase family. NagB subfamily.

The enzyme catalyses alpha-D-glucosamine 6-phosphate + H2O = beta-D-fructose 6-phosphate + NH4(+). It functions in the pathway amino-sugar metabolism; N-acetylneuraminate degradation; D-fructose 6-phosphate from N-acetylneuraminate: step 5/5. Catalyzes the reversible isomerization-deamination of glucosamine 6-phosphate (GlcN6P) to form fructose 6-phosphate (Fru6P) and ammonium ion. This is Glucosamine-6-phosphate deaminase from Lysinibacillus sphaericus (strain C3-41).